Reading from the N-terminus, the 65-residue chain is Diapause-specific peptide (65 aa).

Residues 1–24 (MGAALKMTIFLLIVACAMIATTEA) form the signal peptide. Cystine bridges form between cysteine 31–cysteine 45, cysteine 35–cysteine 57, and cysteine 46–cysteine 64.

Highly expressed in the fat body.

The protein localises to the secreted. Has antifungal activity against T.rubrum. Blocks voltage-dependent N-type calcium channels (Cav2.2 / CACNA1B). The polypeptide is Diapause-specific peptide (Gastrophysa atrocyanea (Leaf beetle)).